We begin with the raw amino-acid sequence, 358 residues long: DnaJ homolog subfamily C member 18 (358 aa).

The 65-residue stretch at 82 to 146 (NYYEILGVSR…DKRLRYDEYG (65 aa)) folds into the J domain. Residues 228–248 (AFIQLLPVLVIVIISVITQLL) traverse the membrane as a helical segment.

It is found in the endoplasmic reticulum membrane. Functionally, (Microbial infection) In case of infection by polyomavirus, involved in the virus endoplasmic reticulum membrane penetration and infection. Regulates the recruitment of DNAJB12:DNAJB14 into SV40-induced foci and all cooperate to guide SV40 across the endoplasmic reticulum membrane. The foci represent the site from which SV40 penetrates into the cytosol. The protein is DnaJ homolog subfamily C member 18 of Homo sapiens (Human).